The chain runs to 423 residues: uncharacterized protein (423 aa).

The protein belongs to the asfivirus E423R family.

The protein localises to the virion. This is an uncharacterized protein from Ornithodoros (relapsing fever ticks).